The chain runs to 514 residues: MKKSAYPIEIIQKQAPYHPDPTMIFNHLCESRSETLLLETADNKKKRSRKIMIIDSAMRISSEHNAVKLTPLSINGMEILLVLKKIISKKIEIYRRKKNTILIFPNIEKDLDEDKKLFSLSVFDAFRLIIKTFENREKKSKAMFFGGLFSYDLISVFETLPKLKGNQKCSNFCFYLAETLLVLDHQQKTCLIQSSLFTKNSNEKKRIEERSVEIKQKLNQKLNSIPKIKIKDINLTSNMNNFEYGSIIKKLQKLIQKGEIFQVVPSRKFYLPCPNPLSAYQKLKKSNPSPYMFFMQDQDFTLFGASPESSLKYDEKTRKIELYPIAGTRPRGRTKDGNLDLDLDSRIELEMRTNHKELAEHLMLVDLARNDLARICKPGSRYVSDLVRVDRYSHVMHLVSRVIGELREGLDALHAYASCMNMGTLTGAPKVCAMQLIAEYEKEKRGSYGGAIGYFTDLGNLDTCITIRSAYVEKRYCYNQAGAGIVYNSIPEDEVNESLNKAQAVINAIKNAHY.

Residues Thr40 and 290–292 each bind L-tryptophan; that span reads PYM. 327–328 is a binding site for chorismate; that stretch reads GT. Glu360 serves as a coordination point for Mg(2+). Residues Tyr448, Arg468, 482 to 484, and Gly484 contribute to the chorismate site; that span reads GAG. Position 497 (Glu497) interacts with Mg(2+).

It belongs to the anthranilate synthase component I family. In terms of assembly, heterotetramer consisting of two non-identical subunits: a beta subunit (TrpG) and a large alpha subunit (TrpE). Mg(2+) is required as a cofactor.

It carries out the reaction chorismate + L-glutamine = anthranilate + pyruvate + L-glutamate + H(+). The protein operates within amino-acid biosynthesis; L-tryptophan biosynthesis; L-tryptophan from chorismate: step 1/5. Its activity is regulated as follows. Feedback inhibited by tryptophan. Functionally, part of a heterotetrameric complex that catalyzes the two-step biosynthesis of anthranilate, an intermediate in the biosynthesis of L-tryptophan. In the first step, the glutamine-binding beta subunit (TrpG) of anthranilate synthase (AS) provides the glutamine amidotransferase activity which generates ammonia as a substrate that, along with chorismate, is used in the second step, catalyzed by the large alpha subunit of AS (TrpE) to produce anthranilate. In the absence of TrpG, TrpE can synthesize anthranilate directly from chorismate and high concentrations of ammonia. The polypeptide is Anthranilate synthase component 1 (trpE) (Buchnera aphidicola subsp. Rhopalosiphum padi).